We begin with the raw amino-acid sequence, 325 residues long: Thioredoxin reductase (325 aa).

Residues 10-13 (SGPS), 39-40 (IA), Gln-44, Asn-53, Val-86, Cys-143, Asp-286, and 293-295 (RQA) each bind FAD. Cysteines 140 and 143 form a disulfide.

It belongs to the class-II pyridine nucleotide-disulfide oxidoreductase family. In terms of assembly, homodimer. FAD serves as cofactor.

The protein localises to the cytoplasm. The catalysed reaction is [thioredoxin]-dithiol + NADP(+) = [thioredoxin]-disulfide + NADPH + H(+). This Pneumocystis carinii protein is Thioredoxin reductase (TRR1).